We begin with the raw amino-acid sequence, 528 residues long: Cytochrome b5 reductase 4 (528 aa).

Residue M1 is modified to N-acetylmethionine. Positions 1-29 (MLNVPSQAFPAPGSQQRVSSQGRSKVPLK) are disordered. The span at 13–24 (GSQQRVSSQGRS) shows a compositional bias: low complexity. One can recognise a Cytochrome b5 heme-binding domain in the interval 54 to 130 (LIEVTEEELK…LKECLVGRMA (77 aa)). Heme-binding residues include H89 and H112. The region spanning 172–263 (LSSPSYDWFQ…KESVSWQCLG (92 aa)) is the CS domain. An FAD-binding FR-type domain is found at 280 to 392 (LYYRRCQLIS…SGPEGDFKVS (113 aa)). Residues 372–387 (DRLQ…GPEG) and 399–431 (DLFL…KVKL) contribute to the FAD site.

The protein belongs to the flavoprotein pyridine nucleotide cytochrome reductase family. FAD serves as cofactor. As to expression, ubiquitously expressed. Isoform 2 is expressed in testis, brain, skeletal muscle and in the male germline.

The protein resides in the endoplasmic reticulum. The enzyme catalyses 2 Fe(III)-[cytochrome b5] + NADH = 2 Fe(II)-[cytochrome b5] + NAD(+) + H(+). Functionally, NADH-cytochrome b5 reductase involved in endoplasmic reticulum stress response pathway. Plays a critical role in protecting pancreatic beta-cells against oxidant stress, possibly by protecting the cell from excess buildup of reactive oxygen species (ROS). The protein is Cytochrome b5 reductase 4 (Cyb5r4) of Mus musculus (Mouse).